Reading from the N-terminus, the 213-residue chain is RNA polymerase I subunit H (213 aa).

Residues 1 to 19 show a composition bias toward basic and acidic residues; it reads MVERMKKDTGDETKTKVQE. Residues 1 to 70 form a disordered region; sequence MVERMKKDTG…AREFTDKPWR (70 aa). A compositionally biased stretch (pro residues) spans 21–31; that stretch reads PPSPSPPPPPP. Composition is skewed to basic and acidic residues over residues 43 to 53 and 60 to 69; these read VPEREKKQIER and HAREFTDKPW.

In terms of tissue distribution, expressed during spermatogenesis, initially at pachytene stage with abundance increasing in round spermatids and decreasing again during spermatid elongation.

Its function is as follows. May be involved in male sterility. The protein is RNA polymerase I subunit H of Mus musculus (Mouse).